Consider the following 1549-residue polypeptide: VPS10 homolog 1 (1549 aa).

The first 21 residues, M1–A21, serve as a signal peptide directing secretion. The Lumenal segment spans residues E22–T1369. 6 BNR repeats span residues E57–T68, Y101–P112, I159–Q170, I228–E239, K393–N404, and F465–L476. Residue N479 is glycosylated (N-linked (GlcNAc...) asparagine). BNR repeat units follow at residues Y511 to E522 and Y740 to R751. N769 is a glycosylation site (N-linked (GlcNAc...) asparagine). Residues Y837–E848 form a BNR 9 repeat. A glycan (N-linked (GlcNAc...) asparagine) is linked at N986. BNR repeat units lie at residues K1040 to F1051, F1119 to E1130, and S1160 to D1171. The helical transmembrane segment at G1370–V1390 threads the bilayer. The Cytoplasmic portion of the chain corresponds to Y1391–K1549. The segment at E1479–K1549 is disordered. A compositionally biased stretch (polar residues) spans D1489–E1501. Residues A1535 to K1549 are compositionally biased toward basic and acidic residues.

It belongs to the VPS10-related sortilin family.

The protein localises to the golgi apparatus. The protein resides in the trans-Golgi network membrane. It is found in the endosome membrane. Functions as a sorting receptor in the Golgi compartment required for the intracellular sorting and delivery of soluble vacuolar proteins, like carboxypeptidase Y (CPY) and proteinase A. The polypeptide is VPS10 homolog 1 (VTH1) (Saccharomyces cerevisiae (strain ATCC 204508 / S288c) (Baker's yeast)).